The sequence spans 232 residues: Histone H1B (232 aa).

Low complexity predominate over residues methionine 1–alanine 18. 2 disordered regions span residues methionine 1–serine 44 and glutamine 99–alanine 232. Residues threonine 39–alanine 113 form the H15 domain. Basic residues-rich tracts occupy residues lysine 132–lysine 141, lysine 147–lysine 173, alanine 181–alanine 197, lysine 205–lysine 214, and lysine 222–alanine 232.

This sequence belongs to the histone H1/H5 family.

The protein localises to the nucleus. It localises to the chromosome. In terms of biological role, histones H1 are necessary for the condensation of nucleosome chains into higher-order structures. The chain is Histone H1B from Chironomus tentans (Midge).